We begin with the raw amino-acid sequence, 449 residues long: Phosphoglucosamine mutase (449 aa).

S101 serves as the catalytic Phosphoserine intermediate. Mg(2+) is bound by residues S101, D243, D245, and D247. S101 bears the Phosphoserine mark.

The protein belongs to the phosphohexose mutase family. It depends on Mg(2+) as a cofactor. Post-translationally, activated by phosphorylation.

The catalysed reaction is alpha-D-glucosamine 1-phosphate = D-glucosamine 6-phosphate. Functionally, catalyzes the conversion of glucosamine-6-phosphate to glucosamine-1-phosphate. The polypeptide is Phosphoglucosamine mutase (Syntrophobacter fumaroxidans (strain DSM 10017 / MPOB)).